A 547-amino-acid polypeptide reads, in one-letter code: Chaperonin GroEL (547 aa).

Residues Thr30–Pro33, Lys51, Asp87–Thr91, Gly415, and Asp496 each bind ATP. The tract at residues Lys525–Met547 is disordered. Gly residues predominate over residues Gly533–Met547.

The protein belongs to the chaperonin (HSP60) family. Forms a cylinder of 14 subunits composed of two heptameric rings stacked back-to-back. Interacts with the co-chaperonin GroES.

Its subcellular location is the cytoplasm. It catalyses the reaction ATP + H2O + a folded polypeptide = ADP + phosphate + an unfolded polypeptide.. In terms of biological role, together with its co-chaperonin GroES, plays an essential role in assisting protein folding. The GroEL-GroES system forms a nano-cage that allows encapsulation of the non-native substrate proteins and provides a physical environment optimized to promote and accelerate protein folding. The polypeptide is Chaperonin GroEL (Cereibacter sphaeroides (strain ATCC 17029 / ATH 2.4.9) (Rhodobacter sphaeroides)).